The chain runs to 344 residues: Glutamine synthetase (344 aa).

A GS beta-grasp domain is found at 4 to 86; sequence YKLEYIWLDG…VMCEVMMPDG (83 aa). Residues 89 to 344 enclose the GS catalytic domain; it reads PHASNKRATI…SVPTEKKAVA (256 aa). Mg(2+) is bound by residues E109 and E111. ATP is bound at residue E167. Residues E172 and E179 each contribute to the Mg(2+) site. Residue E278 coordinates L-glutamate.

The protein belongs to the glutamine synthetase family. In terms of assembly, homooctamer and homotetramer. Mg(2+) serves as cofactor.

Its subcellular location is the cytoplasm. It catalyses the reaction L-glutamate + NH4(+) + ATP = L-glutamine + ADP + phosphate + H(+). Its function is as follows. Catalyzes the ATP-dependent biosynthesis of glutamine from glutamate and ammonia. In Bradyrhizobium diazoefficiens (strain JCM 10833 / BCRC 13528 / IAM 13628 / NBRC 14792 / USDA 110), this protein is Glutamine synthetase.